Consider the following 413-residue polypeptide: N-acylneuraminate cytidylyltransferase (413 aa).

The protein belongs to the CMP-NeuNAc synthase family. Requires Mg(2+) as cofactor. Mn(2+) is required as a cofactor.

The protein resides in the cytoplasm. It catalyses the reaction an N-acylneuraminate + CTP = a CMP-N-acyl-beta-neuraminate + diphosphate. In terms of biological role, catalyzes the formation of CMP-N-acetylneuraminic acid (CMP-NeuNAc), which is essential for the formation of the capsule. The polypeptide is N-acylneuraminate cytidylyltransferase (neuA) (Streptococcus agalactiae serotype Ia (strain ATCC 27591 / A909 / CDC SS700)).